The primary structure comprises 216 residues: MAVALIFATRARIKILFFDMIFSLEKDPFDLFSKWYKAVLNSPCEQPTAMTLATCSKDCIPSARVVLLKEYSKEGFVFFTNVNSKKGKELTENPKAALVFHWIEFARQVRIEGEVKLLNDERTDKYFSSRALGSQISAWCSKQSSILKDWQDFEQAIKLKEKEFHNTQVSRPDFWVGFCVIPKVIEFWQEGEYRKHIRFRYTLVEGSDWKVEQLYP.

FMN is bound by residues 64-69, 79-80, Lys85, Lys86, and Gln108; these read RVVLLK and FT. A substrate-binding site is contributed by Lys69. Substrate contacts are provided by Tyr126, Arg130, and Ser134. FMN-binding positions include 143 to 144 and Trp188; that span reads QS. 194–196 lines the substrate pocket; that stretch reads RKH. Arg198 contacts FMN.

The protein belongs to the pyridoxamine 5'-phosphate oxidase family. In terms of assembly, homodimer. FMN is required as a cofactor.

It catalyses the reaction pyridoxamine 5'-phosphate + O2 + H2O = pyridoxal 5'-phosphate + H2O2 + NH4(+). The catalysed reaction is pyridoxine 5'-phosphate + O2 = pyridoxal 5'-phosphate + H2O2. It functions in the pathway cofactor metabolism; pyridoxal 5'-phosphate salvage; pyridoxal 5'-phosphate from pyridoxamine 5'-phosphate: step 1/1. It participates in cofactor metabolism; pyridoxal 5'-phosphate salvage; pyridoxal 5'-phosphate from pyridoxine 5'-phosphate: step 1/1. In terms of biological role, catalyzes the oxidation of either pyridoxine 5'-phosphate (PNP) or pyridoxamine 5'-phosphate (PMP) into pyridoxal 5'-phosphate (PLP). The chain is Pyridoxine/pyridoxamine 5'-phosphate oxidase from Wolbachia pipientis wMel.